The sequence spans 227 residues: 7-cyano-7-deazaguanine synthase (227 aa).

7 to 17 contacts ATP; sequence LSGGMDSLVTT. 4 residues coordinate Zn(2+): Cys187, Cys195, Cys198, and Cys201.

The protein belongs to the QueC family. The cofactor is Zn(2+).

It carries out the reaction 7-carboxy-7-deazaguanine + NH4(+) + ATP = 7-cyano-7-deazaguanine + ADP + phosphate + H2O + H(+). It functions in the pathway purine metabolism; 7-cyano-7-deazaguanine biosynthesis. In terms of biological role, catalyzes the ATP-dependent conversion of 7-carboxy-7-deazaguanine (CDG) to 7-cyano-7-deazaguanine (preQ(0)). This Chlorobium phaeovibrioides (strain DSM 265 / 1930) (Prosthecochloris vibrioformis (strain DSM 265)) protein is 7-cyano-7-deazaguanine synthase.